The following is a 141-amino-acid chain: Ribonuclease VapC38 (141 aa).

Mg(2+) is bound by residues Asp-5 and Asp-102.

The protein belongs to the PINc/VapC protein family. Requires Mg(2+) as cofactor.

The protein resides in the secreted. Toxic component of a type II toxin-antitoxin (TA) system. An RNase. Its cognate antitoxin is VapB38. The sequence is that of Ribonuclease VapC38 from Mycobacterium tuberculosis (strain ATCC 25618 / H37Rv).